A 33-amino-acid chain; its full sequence is Natriuretic peptide NP2 (33 aa).

Cys10 and Cys26 are disulfide-bonded.

Expressed by the venom gland.

It localises to the secreted. In terms of biological role, snake venom natriuretic peptide that shows an increase in perfusion pressure, urinary flow and glomerular filtration rate. Reduces total and proximal tubular transport of sodium. In the aortic ring assay, causes a relaxant effect in endothelium-intact thoracic aortic rings precontracted with phenylephrine in the presence and absence of isatin, a natriuretic receptor antagonist. This chain is Natriuretic peptide NP2, found in Crotalus durissus cascavella (Northeastern Brazilian rattlesnake).